Reading from the N-terminus, the 109-residue chain is MFGKGGLGGLMKQAQQMQEKMQKMQEEIAQLEVTGESGAGLVKIAINGAHNCRRIDIDPSLMEDDKEMLEDLIAAAFNDAVRRAEELQKEKMASVTAGMPLPPGMKFPF.

Belongs to the YbaB/EbfC family. Homodimer.

The protein resides in the cytoplasm. The protein localises to the nucleoid. In terms of biological role, binds to DNA and alters its conformation. May be involved in regulation of gene expression, nucleoid organization and DNA protection. The polypeptide is Nucleoid-associated protein CGSHiEE_00780 (Haemophilus influenzae (strain PittEE)).